Here is a 149-residue protein sequence, read N- to C-terminus: MKEAFKEALARFASGVTVVAARLGEEERGMTATAFMSLSLEPPLVALAVSERAKLLPVLEGAGAFTVSLLREGQEAVSEHFAGRPKEGIALEEGRVKGALAVLRCRLHALYPGGDHRIVVGLVEEVELGEEGPPLVYFQRGYRRLVWPS.

An FAD-binding site is contributed by 27 to 34 (ERGMTATA). Serine 37 is an NAD(+) binding site. FAD contacts are provided by residues 48-50 (AVS), 54-55 (KL), and histidine 80. NAD(+) contacts are provided by residues histidine 116 and 137–140 (YFQR).

It belongs to the non-flavoprotein flavin reductase family. HpaC subfamily. In terms of assembly, homodimer. 4-HPA 3-monooxygenase consists of a reductase component HpaC and an oxygenase component HpaB.

The catalysed reaction is a reduced flavin + NAD(+) = an oxidized flavin + NADH + 2 H(+). The protein operates within aromatic compound metabolism; 4-hydroxyphenylacetate degradation; pyruvate and succinate semialdehyde from 4-hydroxyphenylacetate: step 1/7. Catalyzes the reduction of free flavins (FMN, FAD and riboflavin) by NADH. Subsequently, the reduced flavins diffuse to the large HpaB component. It utilizes NADH, but not NADPH as an electron donor, and both FAD and FMN as electron acceptors. The sequence is that of 4-hydroxyphenylacetate 3-monooxygenase, reductase component from Thermus thermophilus (strain ATCC 27634 / DSM 579 / HB8).